The primary structure comprises 185 residues: Kappa-casein (185 aa).

A signal peptide spans 1-20; sequence MKSFFLVVNILALTLPFLGA. Residue T143 is glycosylated (O-linked (GalNAc...) threonine). Phosphoserine; alternate is present on S161. S161 carries O-linked (GalNAc...) serine; alternate glycosylation. O-linked (GalNAc...) threonine glycosylation occurs at T178. Phosphoserine is present on S179.

The protein belongs to the kappa-casein family. In terms of tissue distribution, mammary gland specific. Secreted in milk.

The protein localises to the secreted. Its function is as follows. Kappa-casein stabilizes micelle formation, preventing casein precipitation in milk. The protein is Kappa-casein (CSN3) of Equus caballus (Horse).